Reading from the N-terminus, the 316-residue chain is 4-hydroxy-3-methylbut-2-enyl diphosphate reductase (316 aa).

Cysteine 12 provides a ligand contact to [4Fe-4S] cluster. Positions 41 and 74 each coordinate (2E)-4-hydroxy-3-methylbut-2-enyl diphosphate. Dimethylallyl diphosphate-binding residues include histidine 41 and histidine 74. Isopentenyl diphosphate-binding residues include histidine 41 and histidine 74. A [4Fe-4S] cluster-binding site is contributed by cysteine 96. Histidine 124 is a (2E)-4-hydroxy-3-methylbut-2-enyl diphosphate binding site. Histidine 124 contributes to the dimethylallyl diphosphate binding site. An isopentenyl diphosphate-binding site is contributed by histidine 124. The active-site Proton donor is the glutamate 126. Threonine 167 contacts (2E)-4-hydroxy-3-methylbut-2-enyl diphosphate. Cysteine 197 contributes to the [4Fe-4S] cluster binding site. Residues serine 225, serine 226, asparagine 227, and serine 269 each coordinate (2E)-4-hydroxy-3-methylbut-2-enyl diphosphate. Dimethylallyl diphosphate is bound by residues serine 225, serine 226, asparagine 227, and serine 269. Serine 225, serine 226, asparagine 227, and serine 269 together coordinate isopentenyl diphosphate.

This sequence belongs to the IspH family. In terms of assembly, homodimer. It depends on [4Fe-4S] cluster as a cofactor.

The enzyme catalyses isopentenyl diphosphate + 2 oxidized [2Fe-2S]-[ferredoxin] + H2O = (2E)-4-hydroxy-3-methylbut-2-enyl diphosphate + 2 reduced [2Fe-2S]-[ferredoxin] + 2 H(+). It catalyses the reaction dimethylallyl diphosphate + 2 oxidized [2Fe-2S]-[ferredoxin] + H2O = (2E)-4-hydroxy-3-methylbut-2-enyl diphosphate + 2 reduced [2Fe-2S]-[ferredoxin] + 2 H(+). It functions in the pathway isoprenoid biosynthesis; dimethylallyl diphosphate biosynthesis; dimethylallyl diphosphate from (2E)-4-hydroxy-3-methylbutenyl diphosphate: step 1/1. The protein operates within isoprenoid biosynthesis; isopentenyl diphosphate biosynthesis via DXP pathway; isopentenyl diphosphate from 1-deoxy-D-xylulose 5-phosphate: step 6/6. In terms of biological role, catalyzes the conversion of 1-hydroxy-2-methyl-2-(E)-butenyl 4-diphosphate (HMBPP) into a mixture of isopentenyl diphosphate (IPP) and dimethylallyl diphosphate (DMAPP). Acts in the terminal step of the DOXP/MEP pathway for isoprenoid precursor biosynthesis. In Shigella flexneri serotype 5b (strain 8401), this protein is 4-hydroxy-3-methylbut-2-enyl diphosphate reductase.